The sequence spans 315 residues: Biotin synthase (315 aa).

The Radical SAM core domain maps to 39-266 (NSLQFATLLS…KSAIRLTAGR (228 aa)). The [4Fe-4S] cluster site is built by Cys54, Cys58, and Cys61. The [2Fe-2S] cluster site is built by Cys98, Cys129, Cys189, and Arg261.

This sequence belongs to the radical SAM superfamily. Biotin synthase family. In terms of assembly, homodimer. Requires [4Fe-4S] cluster as cofactor. [2Fe-2S] cluster serves as cofactor.

It catalyses the reaction (4R,5S)-dethiobiotin + (sulfur carrier)-SH + 2 reduced [2Fe-2S]-[ferredoxin] + 2 S-adenosyl-L-methionine = (sulfur carrier)-H + biotin + 2 5'-deoxyadenosine + 2 L-methionine + 2 oxidized [2Fe-2S]-[ferredoxin]. It participates in cofactor biosynthesis; biotin biosynthesis; biotin from 7,8-diaminononanoate: step 2/2. Its function is as follows. Catalyzes the conversion of dethiobiotin (DTB) to biotin by the insertion of a sulfur atom into dethiobiotin via a radical-based mechanism. This Legionella pneumophila (strain Paris) protein is Biotin synthase.